The chain runs to 387 residues: MSVIKMTDLDLAGKRVLIRADLNVPVKDGKVTSDARIVATLPTIKLALEKGAKLMITSHLGRPTEGEYNEEFSLAPVVNYLKDALSCPVRLAKDYLDGVDVAAGELVVLENCRFNKGEKKNTEELAKKYAALCDVFVMDAFGTAHRAEGSTYGVAQFAPIACAGPLLAGELEALGKAMLKPERPMVAIVGGSKVSTKLTVLESLSKIADQLVVGGGIANTFIAAAGHNVGKSLCEHDLLDTAKKLAAETNIPVTTDVVVGTEFSESTPATIKSVSDVTDGDMIFDIGPDSAKALADIIMNAKTILWNGPVGVFEFDQFSAGTKVIAEAIAASPAFSIAGGGDTLAAIDKFGIADKVSYISTGGGAFLEFVEGKVLPAVAMLEQRAKA.

Residues 21-23, Arg-36, 59-62, Arg-113, and Arg-146 contribute to the substrate site; these read DLN and HLGR. Residues Lys-197, Glu-314, and 340-343 contribute to the ATP site; that span reads GGDT.

The protein belongs to the phosphoglycerate kinase family. As to quaternary structure, monomer.

Its subcellular location is the cytoplasm. The catalysed reaction is (2R)-3-phosphoglycerate + ATP = (2R)-3-phospho-glyceroyl phosphate + ADP. It participates in carbohydrate degradation; glycolysis; pyruvate from D-glyceraldehyde 3-phosphate: step 2/5. The chain is Phosphoglycerate kinase from Aeromonas salmonicida (strain A449).